The primary structure comprises 779 residues: MTASTRNGSPSPSPAAPTATEQESKSMTTTPANPPETKSQTNGKGSGTAQSSQKPASTSANAKDPLRPRRKKAKRACFACQRAHLTCGDERPCQRCIKRGLQDACHDGVRKKAKYLHDAPNEALLPGIRGNYYNQANTTRNIPNQRGNASNSNSNKVSRQSVSSANFYTPQAARSYNVYVQAKSQQSHVRPAVMQDASMNPSVFHAQSPSSTQNFDLSSNPQTQNLSSAMSQTASSVSGQNQDPFGAAFFDPSHPALFNFDIASMNFGNRYGALEFGMLGHMATGAGDTPPSDSATQRGSIGRSSGTFTAQNFGDSANNQSPFLFGDPVLNDWNPTGQGQANPRNIYNQNAVAGQMGEQNPHAFAIESAPMNFASPSSTESPQMTTTTPFDEANANFSSRTNLMHPTNTPQQSRISTPGLKHQGLHVGVKRRYRSPSSIYESVKEPYSYTSGFHSLTAFIQRRFSPQKTLQIAKALASIRPSFIATTKTLNQDDLIFMEKCFQRTLWEYEDFINACGTPTIVCRRTGEIAAVGKEFSILTGWKKEVLLGKEPNLNVNTGSSLSSASSVRGSSTFTPRNNNTHNSIDPHTGMPTVGGGGASGRTQPVFLAELLDDDSVIEFYEDFAKLAFGDSRGSVMTTCKLLKYKTKEDSAALFHGKEETQQGGVDGSSGTGTTTSGDVATTTATGTSTSNGANANTNGNNTNPNDPSSAASSSASSALQGPQQSPRQTWGKRGIAGEAGMNQLGFRDGKVECSYCWTVKRDVFDIPMLIVMNFLPCI.

The segment at 1-70 is disordered; it reads MTASTRNGSP…NAKDPLRPRR (70 aa). Residues 25–61 are compositionally biased toward polar residues; it reads KSMTTTPANPPETKSQTNGKGSGTAQSSQKPASTSAN. The segment at residues 77–105 is a DNA-binding region (zn(2)-C6 fungal-type); sequence CFACQRAHLTCGDERPCQRCIKRGLQDAC. Disordered stretches follow at residues 135-163, 202-239, 285-344, 401-421, 559-590, and 655-732; these read QANT…QSVS, SVFH…SVSG, GAGD…ANPR, TNLM…PGLK, GSSL…PHTG, and FHGK…QTWG. Over residues 202–226 the composition is skewed to polar residues; the sequence is SVFHAQSPSSTQNFDLSSNPQTQNL. Residues 227 to 238 show a composition bias toward low complexity; sequence SSAMSQTASSVS. Composition is skewed to polar residues over residues 291-322, 333-344, and 401-416; these read PSDS…NQSP, WNPTGQGQANPR, and TNLM…SRIS. Positions 560–572 are enriched in low complexity; it reads SSLSSASSVRGSS. Residues 573-586 show a composition bias toward polar residues; the sequence is TFTPRNNNTHNSID. Positions 672 to 719 are enriched in low complexity; that stretch reads TGTTTSGDVATTTATGTSTSNGANANTNGNNTNPNDPSSAASSSASSA. Residues 720 to 729 show a composition bias toward polar residues; that stretch reads LQGPQQSPRQ.

The protein belongs to the ERT1/acuK family.

The protein resides in the nucleus. Functionally, transcription factor which regulates nonfermentable carbon utilization. Activator of gluconeogenetic genes. This chain is Transcription activator of gluconeogenesis BDCG_02812, found in Ajellomyces dermatitidis (strain ER-3 / ATCC MYA-2586) (Blastomyces dermatitidis).